A 101-amino-acid chain; its full sequence is Integration host factor subunit beta (101 aa).

The segment at 57-77 (PARAGRNPRTGAHVPVDQKSV) is disordered.

It belongs to the bacterial histone-like protein family. Heterodimer of an alpha and a beta chain.

This protein is one of the two subunits of integration host factor, a specific DNA-binding protein that functions in genetic recombination as well as in transcriptional and translational control. This is Integration host factor subunit beta from Rhodopseudomonas palustris (strain HaA2).